The chain runs to 215 residues: CASP-like protein UU3 (215 aa).

The Cytoplasmic segment spans residues 1–44 (MATAWESEYFDKVTPGERERAVPPMVPQQTPPPVYIQPQVSRNG). Residues 45-65 (IVASIVLRLLTLIFAVVALAV) form a helical membrane-spanning segment. The Extracellular segment spans residues 66 to 93 (LASNTGSFQVSTGSATSVKTIKFTILSA). Residues 94 to 114 (FTYLFAVCGVVAVYSLLLIIV) form a helical membrane-spanning segment. The Cytoplasmic portion of the chain corresponds to 115–128 (EMIDLAVRGFTTHT). A helical membrane pass occupies residues 129-149 (LVAIFVFVLDQTMAYVLISAA). At 150 to 185 (SASANGVKVSRDESNITGYKFDISCSNLGIDDYCTK) the chain is on the extracellular side. Asn164 carries N-linked (GlcNAc...) asparagine glycosylation. Residues 186–206 (ASASVAIAFIAFLFMAITAGV) form a helical membrane-spanning segment. At 207–215 (SARRLFKLP) the chain is on the cytoplasmic side.

It belongs to the Casparian strip membrane proteins (CASP) family. Homodimer and heterodimers.

The protein resides in the cell membrane. This chain is CASP-like protein UU3, found in Physcomitrium patens (Spreading-leaved earth moss).